A 2278-amino-acid polypeptide reads, in one-letter code: MRGHQFKSWIFELREILREIKNSHHFLDSWTQFNSVGSFIHIFFHQERFLKLFDPRIWSILLSRNSQGSTSNRYFTIKGVILFVVAVLIYRINNRNMVERKNLYLIGLLPIPMNSIGPRNDTLEESVGSSNINRLIVSLLYLPKGKKISESCFLNPKESTWVLPITKKCSMPESNWGSRWWRNWIGKKRDSSCKISNETVAGIEILFKEKDLKYLEFLFVYYMDDPIRKDHDWELFDRLSLRKSRNRINLNSGPLFEILVKHWISYLMSAFREKIPIEVEGFFKQQGAGSTIQSNDIEHVSHLFSRNKWAISLQNCAQFHMWQFRQDLFVSWGKNPPESDFLRNVSRENWIWLDNVWLVNKDRFFSKVQNVSSNIQYDSTRSSFVQVTDSSQLKGSSDQSRDHLDSISNEDSEYHTLINQREIQQRKERSILWDPSFLQTERKEIESGRFPKCLSGYSSMSRLFTEREKQMINHLFPEEIEEFLGNPTRSVRSFFSDRWSELHLGSNPTERSTRDQKLLKKQQDLSFVPSRRSEKKEMVNIFKIITYLQNTVSIHPISSDPGCDMVPKDEPDMDSSNKISFLNKNPFFDLFHLFHDRNRGGYTLHYDFASEERFQEMADLFTLSITEPDLVYHKGFAFSIDSCGLDQKQFLNEARDESKKKSLLVLPPIFYEENESFSRRIRKKWVRISCGNDLEDPKPKIVVFASNNIMEAVTQYRLIRNLIQIQYSTYGYIRNVLNRFFLMNRSDRNFEYGIQRDQIGKDTLNHRTIMKYTINQYLSNLKKSQKKWFEPLILISRTERSMNRDPDAYRYKWSNGSKSFQEHLEQSVSEQKSRFQVVFDRLRINQYSIDWSEVIDKKDLSKSLRFFLSKSLLFLSKLLLFLSNSLPFFCVSFGNIPIHRSEIYIYEELKGPNDQLCNQLLESIGLQIVHLKKLKPFLLDDHDTSQKSKFLINGGTISPFLFNKIPKWMIDSFHTRNNRRKSFDNPDSYFSMIFHDQDNWLNPVKPFHRSSLISSFYKANRLRFLNNPHHFCFYWNTRFPFSVEKARINNSDFTYGQFLNILFIRNKIFSLCVGKKKHAFWGRDTISPIESQVSNIFIPNDFPQSGDETYNLYKSFHFPSRSDPFVRRAIYSIADISGTPLTEGQIVNFERTYCQPLSDMNLSDSEGKNLHQYLNFNSNMGLIHTPCSEKDLSSEKRKKWSLCLKKCVEKGQMYRTFQRDSAFSTLSKWNLFQTYMPWFLTSTGYKYLNLIFLDTFSDLLPILSSSQKFVSIFPDIMHGSGISWRILQKKLCLPQWNLISEISSKCLHNLLLSEEMIHRNNESPLISTHLRSPNAREFLYSILFLLLVAGYLVRTHLLFVSRASSELQTEFEKVKSLMIPSSMIELRKLLDRYPTSEPNSFWLKNLFLVALEQLGDSLEEIRGSASGGNMLGPAYGVKSIRSKKKDWNINLIEIIDLIPNPINRITFSRNTRHLSHTSKEIYSLIRKRKNVNGDWIDEKIESWVANSDSIDDEEREFLVQFSTLTTENRIDQILLSLTHSDHLSKNDSGYQMIEQPGAIYLRYLVDIHKKHLMNYEFNPSCLAERRIFLAHYQTITYSQTSCGENSFHFPSPGKPFSLRLALSPSRGILVIGSIGTGRSYLVKYLATNSYVPFITVFLNKFLDNKSKGFLLDEIDIDDSDDIDDSDNLDASDDIDRDLDTELELLTRMNGLTVDMMPEIDRFYITLQFELAKAMSPCIIWIPNIHDLDVNESNDLSLGLLVNHLSRDCERCSTRNILVIASTHIPQKVDPALIAPNKLNTCIKIRRLLIPQQRKHFFTLSYTRGFHLEKKMFHTNGFGSITMGSNARDLVALTNEVLSISITQKKSIIDTNTIRSALHRQTWDLRSQVRSVQDHGILFYQIGRAVAQNVLLSNCPIDPISIYMKKKSCNEGDSYLYKWYFELGTSMKRLTILLYLLSCSAGSVAQDLWSLSVPDEKNGITSYGLVENDSDLVHGLLEVEGALVGSSRTEKDCSQFDNDRVTLLLRPEPRNPLDMMQKGSWSILDQRFLYEKYESEFEEGEGEGALDPQEDLFNHIVWAPRIWRPWGFLFDCIERPNELGFPYWSRSFRGKRIIYDEEDELQENDSGFLQSGTMQYQTRDRSQGLFRISQFIWDPADPLFFLFKDQPPGSVFSHRELFADEEMSKGLLTSQTDPPTSIYKRWFIKNTQEKHFELLINRQRWLRTNSSLSNGSFRSNTLSESYQYLSNLFLSNGTLLDQMPKTLLRKRWLFPDEMKIGFM.

1632-1639 (GSIGTGRS) provides a ligand contact to ATP.

This sequence belongs to the Ycf2 family.

It localises to the plastid. The protein localises to the chloroplast stroma. Its function is as follows. Probable ATPase of unknown function. Its presence in a non-photosynthetic plant (Epifagus virginiana) and experiments in tobacco indicate that it has an essential function which is probably not related to photosynthesis. This is Protein Ycf2 from Solanum tuberosum (Potato).